The sequence spans 36 residues: Neuropeptide F (36 aa).

Position 36 is a phenylalanine amide (Phe36).

This sequence belongs to the NPY family. Central and peripheral nervous system, and muscular pharynx.

The protein resides in the secreted. May perform an important neurotransmitter function and may regulate muscular activity. The protein is Neuropeptide F of Arthurdendyus triangulatus (New Zealand flatworm).